The following is a 710-amino-acid chain: MAGVVLPASIQPQLLRPLAYRILTKKFGLNIKSDGLVALAAYIGTVFGLYWRQNSETTKFLEQFAIIWREQGRGLFVDELNVSQVINEIKEREKIEQDQHVEKRNNLHKANNLDAFLKRPNSPTDTEITTLSQGSATSVVNPDSHSPMMLEEGSPINSDSEPISEHERANGISNVDQQLDWLDYFKVIDAFNQQTFTYDHTKRQYIYVPRPKEVEKNMLSIAKLKLPNVESKVSLFTTRYHIIKDKVLRNEKFQNNDIFNPLSSIIEMGKHMNESDVSPLNSASYMKITQIKNLLGHDGKNFLLLGLLDQNSKGNWSLEDPSGSIELHLQQAIPTKGTYYVPGCIVLVEGIYYTASNTFVVSSITHPPGEKREDTIEAIGNLDLLGAYNPSNENYVARLDKDLKIRLHYLEQELSDNKFVILGGDIYLDEMTTMDGLKKTFDKLTTDPPVAIVFNGSFVSVPVHPSLNAKNVSATVSYKNNFDALATLLSNYENLINDTHMIFIPGPNDPWTSMVGLGTTTMWPQKIIPSSFTQKMSRICRKVHWGSNPLRIAYLSQEIVLTRDDLANRFKRYNIVFPTVEEEKYLENAELQEQYSRNPDVSVGQLIAFKNNLPVSVLESRKLVKTLLDQQHLSPFSSRIRPTVWDLDFTLQLSPLPSSIMLCDTSAPAFDVTYNGCKTINPGRFIHKRAAKYIEFFPASKVLVEEELPF.

Positions 116 to 167 (FLKRPNSPTDTEITTLSQGSATSVVNPDSHSPMMLEEGSPINSDSEPISEHE) are disordered. Residues 121–144 (NSPTDTEITTLSQGSATSVVNPDS) show a composition bias toward polar residues.

Belongs to the DNA polymerase epsilon subunit B family. Heterotetramer. Consists of four subunits: POL2, DPB2, DPB3 and DPB4.

Its subcellular location is the nucleus. As accessory component of the DNA polymerase epsilon (DNA polymerase II) participates in chromosomal DNA replication. The chain is DNA polymerase epsilon subunit B (DPB2) from Kluyveromyces lactis (strain ATCC 8585 / CBS 2359 / DSM 70799 / NBRC 1267 / NRRL Y-1140 / WM37) (Yeast).